The primary structure comprises 418 residues: CinA-like protein (418 aa).

Belongs to the CinA family.

The polypeptide is CinA-like protein (Flavobacterium psychrophilum (strain ATCC 49511 / DSM 21280 / CIP 103535 / JIP02/86)).